The sequence spans 511 residues: Alpha-amylase 2B (511 aa).

A signal peptide spans Met1–Ala15. Pyrrolidone carboxylic acid is present on Gln16. Intrachain disulfides connect Cys43–Cys101, Cys85–Cys130, and Cys156–Cys175. The Ca(2+) site is built by Asn115, Arg173, and Asp182. A chloride-binding site is contributed by Arg210. Catalysis depends on Asp212, which acts as the Nucleophile. His216 contributes to the Ca(2+) binding site. The active-site Proton donor is Glu248. The chloride site is built by Asn313 and Arg352. 2 disulfide bridges follow: Cys393–Cys399 and Cys465–Cys477.

Belongs to the glycosyl hydrolase 13 family. In terms of assembly, monomer. Ca(2+) serves as cofactor. The cofactor is chloride.

The protein localises to the secreted. The enzyme catalyses Endohydrolysis of (1-&gt;4)-alpha-D-glucosidic linkages in polysaccharides containing three or more (1-&gt;4)-alpha-linked D-glucose units.. In Homo sapiens (Human), this protein is Alpha-amylase 2B (AMY2B).